The following is a 154-amino-acid chain: uncharacterized protein (154 aa).

The N-terminal 42 residues, 1–42, are a transit peptide targeting the mitochondrion; sequence MLRVIWKHSSRVTRSIELSNISTTNHTRSLRRLSWISPRRFY.

It localises to the mitochondrion. This is an uncharacterized protein from Saccharomyces cerevisiae (strain ATCC 204508 / S288c) (Baker's yeast).